Reading from the N-terminus, the 575-residue chain is MDGDRGKRDSYWSTSPSGSTTKLASGWERSSKVDTWLLILSFTQWALSIATVIICIIISARQGYSMKEYSMTVEALNMSSREVKESLTSLIRQEVIARAVNIQSSVQTGIPVLLNKNSRDVIQMIDKSCSRQELTQLCESTIAVHHAEGIAPLEPHSFWRCPVGEPYLSSDPKISLLPGPSLLSGSTTISGCVRLPSLSIGEAIYAYSSNLITQGCADIGKSYQVLQLGYISLNSDMFPDLNPVVSHTYDINDNRKSCSVVATGTRGYQLCSMPTVDERTDYSSDGIEDLVLDVLDLKGSTKSHRYRNSEVDLDHPFSALYPSVGNGIATEGSLIFLGYGGLTTPLQGDTKCRTQGCQQVSQDTCNEALKITWLGGKQVVSVIIQVNDYLSERPKIRVTTIPITQNYLGAEGRLLKLGDRVYIYTRSSGWHSQLQIGVLDVSHPLTINWTPHEALSRPGNEECNWYNTCPKECISGVYTDAYPLSPDAANVATVTLYANTSRVNPTIMYSNTTNIINMLRIKDVQLEAAYTTTSCITHFGKGYCFHIIEINQKSLNTLQPMLFKTSIPKLCKAES.

The span at 1–10 (MDGDRGKRDS) shows a compositional bias: basic and acidic residues. The interval 1–24 (MDGDRGKRDSYWSTSPSGSTTKLA) is disordered. The Intravirion portion of the chain corresponds to 1–37 (MDGDRGKRDSYWSTSPSGSTTKLASGWERSSKVDTWL). Residues 10-14 (SYWST) are incorporation in virion. Polar residues predominate over residues 11 to 23 (YWSTSPSGSTTKL). The helical transmembrane segment at 38-58 (LILSFTQWALSIATVIICIII) threads the bilayer. The tract at residues 59–140 (SARQGYSMKE…RQELTQLCES (82 aa)) is involved in interaction with F protein. Residues 59 to 575 (SARQGYSMKE…SIPKLCKAES (517 aa)) are Virion surface-facing. N-linked (GlcNAc...) asparagine; by host glycosylation is present at asparagine 77. 4 disulfide bridges follow: cysteine 192–cysteine 216, cysteine 258–cysteine 271, cysteine 357–cysteine 469, and cysteine 463–cysteine 473. The segment at 254–259 (NRKSCS) is involved in neuraminidase activity. Asparagine 499 and asparagine 511 each carry an N-linked (GlcNAc...) asparagine; by host glycan. A disulfide bridge links cysteine 535 with cysteine 544.

Belongs to the paramyxoviruses hemagglutinin-neuraminidase family. Homotetramer; composed of disulfide-linked homodimers. Interacts with F protein trimer. In terms of processing, N-glycosylated; glycans consist of a mixture of high mannose-type oligosaccharides and of complex-type oligosaccharides.

The protein localises to the virion membrane. The protein resides in the host cell membrane. The catalysed reaction is Hydrolysis of alpha-(2-&gt;3)-, alpha-(2-&gt;6)-, alpha-(2-&gt;8)- glycosidic linkages of terminal sialic acid residues in oligosaccharides, glycoproteins, glycolipids, colominic acid and synthetic substrates.. Functionally, attaches the virus to sialic acid-containing cell receptors and thereby initiating infection. Binding of HN protein to the receptor induces a conformational change that allows the F protein to trigger virion/cell membranes fusion. In terms of biological role, neuraminidase activity ensures the efficient spread of the virus by dissociating the mature virions from the neuraminic acid containing glycoproteins. The polypeptide is Hemagglutinin-neuraminidase (HN) (Sendai virus (strain Fushimi) (SeV)).